A 387-amino-acid chain; its full sequence is Ferrochelatase (387 aa).

Fe cation is bound by residues histidine 196 and glutamate 277.

It belongs to the ferrochelatase family.

Its subcellular location is the cytoplasm. It carries out the reaction heme b + 2 H(+) = protoporphyrin IX + Fe(2+). It participates in porphyrin-containing compound metabolism; protoheme biosynthesis; protoheme from protoporphyrin-IX: step 1/1. Functionally, catalyzes the ferrous insertion into protoporphyrin IX. This Gloeothece citriformis (strain PCC 7424) (Cyanothece sp. (strain PCC 7424)) protein is Ferrochelatase.